We begin with the raw amino-acid sequence, 628 residues long: DNA primase (628 aa).

The CHC2-type zinc finger occupies 40-64; the sequence is CPFHEERSPSFSVAEDKQIFHCFGC. Positions 269-351 constitute a Toprim domain; that stretch reads NTVLLFEGFM…DLSIVSIPEK (83 aa). The Mg(2+) site is built by Glu-275, Asp-319, and Asp-321.

This sequence belongs to the DnaG primase family. As to quaternary structure, monomer. Interacts with DnaB. It depends on Zn(2+) as a cofactor. Mg(2+) serves as cofactor.

It catalyses the reaction ssDNA + n NTP = ssDNA/pppN(pN)n-1 hybrid + (n-1) diphosphate.. In terms of biological role, RNA polymerase that catalyzes the synthesis of short RNA molecules used as primers for DNA polymerase during DNA replication. This Enterococcus faecalis (strain ATCC 700802 / V583) protein is DNA primase.